Here is a 498-residue protein sequence, read N- to C-terminus: ATP synthase subunit beta, chloroplastic (498 aa).

Residue 172–179 coordinates ATP; sequence GGAGVGKT.

This sequence belongs to the ATPase alpha/beta chains family. In terms of assembly, F-type ATPases have 2 components, CF(1) - the catalytic core - and CF(0) - the membrane proton channel. CF(1) has five subunits: alpha(3), beta(3), gamma(1), delta(1), epsilon(1). CF(0) has four main subunits: a(1), b(1), b'(1) and c(9-12).

Its subcellular location is the plastid. It is found in the chloroplast thylakoid membrane. It carries out the reaction ATP + H2O + 4 H(+)(in) = ADP + phosphate + 5 H(+)(out). Its function is as follows. Produces ATP from ADP in the presence of a proton gradient across the membrane. The catalytic sites are hosted primarily by the beta subunits. The chain is ATP synthase subunit beta, chloroplastic from Calamus usitatus (Palm tree).